A 348-amino-acid chain; its full sequence is Nicotinate-nucleotide pyrophosphorylase [carboxylating], chloroplastic (348 aa).

The transit peptide at methionine 1–serine 41 directs the protein to the chloroplast. Residues arginine 139, threonine 170 to lysine 172, arginine 194, lysine 204, glutamate 237, aspartate 264, serine 296 to asparagine 298, and serine 317 to alanine 319 each bind substrate.

Belongs to the NadC/ModD family.

The protein localises to the plastid. The protein resides in the chloroplast. It carries out the reaction nicotinate beta-D-ribonucleotide + CO2 + diphosphate = quinolinate + 5-phospho-alpha-D-ribose 1-diphosphate + 2 H(+). Its pathway is cofactor biosynthesis; NAD(+) biosynthesis; nicotinate D-ribonucleotide from quinolinate: step 1/1. Involved in the biosynthesis of NAD(+). Catalyzes the conversion of quinolate to nicotinate to nicotinate beta-D-ribonucleotide. This Arabidopsis thaliana (Mouse-ear cress) protein is Nicotinate-nucleotide pyrophosphorylase [carboxylating], chloroplastic.